The following is a 373-amino-acid chain: Chaperone protein DnaJ (373 aa).

The J domain occupies 4–69; that stretch reads DYYETLSVER…SKRRIYDTYG (66 aa). A CR-type zinc finger spans residues 131–209; sequence GVSKEVKLSR…CHGEGLVKKT (79 aa). Residues C144, C147, C161, C164, C183, C186, C197, and C200 each coordinate Zn(2+). CXXCXGXG motif repeat units follow at residues 144–151, 161–168, 183–190, and 197–204; these read CWTCEGTG, CPTCNGRG, CPECEGEG, and CNDCHGEG.

The protein belongs to the DnaJ family. Homodimer. It depends on Zn(2+) as a cofactor.

It localises to the cytoplasm. Its function is as follows. Participates actively in the response to hyperosmotic and heat shock by preventing the aggregation of stress-denatured proteins and by disaggregating proteins, also in an autonomous, DnaK-independent fashion. Unfolded proteins bind initially to DnaJ; upon interaction with the DnaJ-bound protein, DnaK hydrolyzes its bound ATP, resulting in the formation of a stable complex. GrpE releases ADP from DnaK; ATP binding to DnaK triggers the release of the substrate protein, thus completing the reaction cycle. Several rounds of ATP-dependent interactions between DnaJ, DnaK and GrpE are required for fully efficient folding. Also involved, together with DnaK and GrpE, in the DNA replication of plasmids through activation of initiation proteins. The chain is Chaperone protein DnaJ from Desulfotalea psychrophila (strain LSv54 / DSM 12343).